Reading from the N-terminus, the 458-residue chain is Exodeoxyribonuclease 7 large subunit (458 aa).

Belongs to the XseA family. Heterooligomer composed of large and small subunits.

The protein localises to the cytoplasm. It catalyses the reaction Exonucleolytic cleavage in either 5'- to 3'- or 3'- to 5'-direction to yield nucleoside 5'-phosphates.. In terms of biological role, bidirectionally degrades single-stranded DNA into large acid-insoluble oligonucleotides, which are then degraded further into small acid-soluble oligonucleotides. The sequence is that of Exodeoxyribonuclease 7 large subunit from Escherichia coli O81 (strain ED1a).